Here is a 783-residue protein sequence, read N- to C-terminus: Protein SCARECROW (783 aa).

The tract at residues 298 to 387 is disordered; the sequence is QPQSQDAITH…QSPPASENTA (90 aa). 2 stretches are compositionally biased toward low complexity: residues 342–353 and 372–384; these read PSSLPFVPVPSS and ESQS…PASE. The stretch at 387–418 forms a coiled coil; the sequence is AAAALIRTESIMRREKEELEQQKKDEEGLHLL. Residues 408-777 enclose the GRAS domain; sequence QKKDEEGLHL…LCLLTASAWR (370 aa). The segment at 415-478 is leucine repeat I (LRI); the sequence is LHLLTLLLQC…LVNSCLGIYA (64 aa). The LxCxE motif signature appears at 422 to 426; sequence LQCAE. Residues 497 to 562 form a VHIID region; it reads FQVFNGISPF…GGPPLVRLTG (66 aa). The VHIID motif lies at 528 to 532; the sequence is VHIID. The tract at residues 572–604 is leucine repeat II (LRII); that stretch reads ATGKRLSDFAQKLGLPFEFFPVADKVGNLDPQR. Residues 613–700 form a PFYRE region; sequence VAVHWLQHSL…QQLLSREIRN (88 aa). The segment at 703–777 is SAW; that stretch reads AVGGPSRSGE…LCLLTASAWR (75 aa).

Belongs to the GRAS family.

It is found in the nucleus. Functionally, putative transcription factor involved in asymmetric cell division. Required for differentiation of endodermis and graviresponses. The protein is Protein SCARECROW (SCR) of Ipomoea nil (Japanese morning glory).